The primary structure comprises 281 residues: MSDVEENNFEGRESRSQSKSPTGTPARVKSESRSGSRSPSRVSKHSESHSRSRSKSRSRSRRHSHRRYTRSRSHSHRRRSRSRSYTPEYRRRRSRSHSPMSNRRRHTGSRANPDPNTCLGVFGLSLYTTERDLREVFSRYGPLSGVNVVYDQRTGRSRGFAFVYFERIDDSKEAMERANGMELDGRRIRVDYSITKRAHTPTPGIYMGRPTHSGGGGGGGGGGGGGGGGGGGRRRDSYYDRGYDRGYDRYEDYDYRRRSPSPYYSRYRSRSRSRSYSPRRY.

The interval 1 to 116 (MSDVEENNFE…TGSRANPDPN (116 aa)) is disordered. Ser2 carries the post-translational modification N-acetylserine. 2 positions are modified to phosphoserine: Ser2 and Ser14. Thr24 is modified (phosphothreonine). Residues 51–82 (RSRSKSRSRSRRHSHRRYTRSRSHSHRRRSRS) are compositionally biased toward basic residues. Phosphoserine occurs at positions 80, 82, and 84. Position 86 is a phosphothreonine (Thr86). Basic residues predominate over residues 90–108 (RRRRSRSHSPMSNRRRHTG). Ser94 and Ser96 each carry phosphoserine. Positions 117–195 (TCLGVFGLSL…RRIRVDYSIT (79 aa)) constitute an RRM domain. Residue Lys196 forms a Glycyl lysine isopeptide (Lys-Gly) (interchain with G-Cter in SUMO2) linkage. Residues 196–223 (KRAHTPTPGIYMGRPTHSGGGGGGGGGG) are linker. Residues 199–281 (HTPTPGIYMG…RSRSYSPRRY (83 aa)) are disordered. Phosphothreonine is present on residues Thr200 and Thr202. A compositionally biased stretch (gly residues) spans 213-231 (SGGGGGGGGGGGGGGGGGG). Omega-N-methylarginine is present on Arg233. Residues 233-257 (RRRDSYYDRGYDRGYDRYEDYDYRR) show a composition bias toward basic and acidic residues. A Phosphoserine modification is found at Ser237. The segment covering 267 to 281 (YRSRSRSRSYSPRRY) has biased composition (basic residues).

It belongs to the splicing factor SR family. Binds to A3 enhancer proteins SRp75, SRp55, SRp40 and SRp30. Interacts with ILDR1 (via C-terminus) and ILDR2. Phosphorylated in the RS domains. As to expression, expressed in inner ear.

The protein resides in the nucleus. In terms of biological role, sequence-specific RNA-binding protein which participates in the control of pre-mRNA splicing. The sequence is that of Transformer-2 protein homolog alpha from Mus musculus (Mouse).